The following is a 676-amino-acid chain: Multisubstrate pseudouridine synthase 7 (676 aa).

2 disordered regions span residues 1–27 (MSDS…AKKL) and 87–110 (KMPK…AARR). Ser-2 carries the post-translational modification N-acetylserine. Positions 94–110 (RSKEEVNAEKESEAARR) are enriched in basic and acidic residues. Catalysis depends on Asp-256, which acts as the Nucleophile. Residues 338-582 (GFINYFGMQR…AGSYRTVIQK (245 aa)) form the TRUD domain.

Belongs to the pseudouridine synthase TruD family.

Its subcellular location is the nucleus. It is found in the cytoplasm. The catalysed reaction is uridine in 5S rRNA = pseudouridine in 5S rRNA. The enzyme catalyses uridine in snRNA = pseudouridine in snRNA. It carries out the reaction uridine(13) in tRNA = pseudouridine(13) in tRNA. It catalyses the reaction a uridine in mRNA = a pseudouridine in mRNA. Functionally, catalyzes pseudouridylation at position 35 in U2 snRNA stem-loop II region which induces particular conformation of the mRNA-U2 snRNA duplex and places the nucleophile in an accessible position for the first step of splicing. Also catalyzes pseudouridylation at position 56 in U2 snRNA. Also catalyzes pseudouridylation at position 50 in 5S rRNA, position 13 in cytoplasmic tRNAs, and position 35 in pre-tRNA(Tyr). Pseudouridine residues in tRNAs may stabilize the local RNA conformation, favor interactions with protein partners and play an important role in the stabilization of the codon-anticodon interaction with mRNA. Also catalyzes pseudouridylation of mRNAs in response to heat shock: mediates pseudouridylation of mRNAs with the consensus sequence 5'-UGUAR-3'. This Saccharomyces cerevisiae (strain ATCC 204508 / S288c) (Baker's yeast) protein is Multisubstrate pseudouridine synthase 7.